The sequence spans 445 residues: tRNA-2-methylthio-N(6)-dimethylallyladenosine synthase (445 aa).

The 122-residue stretch at Lys3–Arg124 folds into the MTTase N-terminal domain. [4Fe-4S] cluster-binding residues include Cys12, Cys48, Cys87, Cys162, Cys166, and Cys169. In terms of domain architecture, Radical SAM core spans Tyr148–Ala380. The region spanning Thr383–Leu445 is the TRAM domain.

Belongs to the methylthiotransferase family. MiaB subfamily. In terms of assembly, monomer. The cofactor is [4Fe-4S] cluster.

It is found in the cytoplasm. It catalyses the reaction N(6)-dimethylallyladenosine(37) in tRNA + (sulfur carrier)-SH + AH2 + 2 S-adenosyl-L-methionine = 2-methylsulfanyl-N(6)-dimethylallyladenosine(37) in tRNA + (sulfur carrier)-H + 5'-deoxyadenosine + L-methionine + A + S-adenosyl-L-homocysteine + 2 H(+). In terms of biological role, catalyzes the methylthiolation of N6-(dimethylallyl)adenosine (i(6)A), leading to the formation of 2-methylthio-N6-(dimethylallyl)adenosine (ms(2)i(6)A) at position 37 in tRNAs that read codons beginning with uridine. This Rickettsia conorii (strain ATCC VR-613 / Malish 7) protein is tRNA-2-methylthio-N(6)-dimethylallyladenosine synthase.